The following is a 240-amino-acid chain: Dihydromonapterin reductase (240 aa).

The Proton acceptor role is filled by tyrosine 152.

The protein belongs to the short-chain dehydrogenases/reductases (SDR) family. FolM subfamily.

It carries out the reaction (6S)-5,6,7,8-tetrahydrofolate + NADP(+) = 7,8-dihydrofolate + NADPH + H(+). The enzyme catalyses 7,8-dihydromonapterin + NADPH + H(+) = 5,6,7,8-tetrahydromonapterin + NADP(+). In terms of biological role, catalyzes the reduction of dihydromonapterin to tetrahydromonapterin. Also has lower activity with dihydrofolate. In Escherichia coli (strain SMS-3-5 / SECEC), this protein is Dihydromonapterin reductase (folM).